We begin with the raw amino-acid sequence, 883 residues long: Aldehyde-alcohol dehydrogenase (883 aa).

The aldehyde dehydrogenase stretch occupies residues 13-456 (KLVAEKHVDE…DNVSAINLLN (444 aa)). Residues 121-126 (ITPTTN), Gly-206, and Gly-224 contribute to the NAD(+) site. Cys-257 acts as the Nucleophile in catalysis. Residues Glu-355, Leu-435, and 438–443 (GSYGRN) contribute to the NAD(+) site. The linker stretch occupies residues 457–464 (IKKVGRRR). NAD(+) contacts are provided by residues Asp-500, Asp-534, 561–565 (GSPMD), 612–613 (TT), Val-625, Lys-634, and Leu-653. Positions 668, 672, 736, and 750 each coordinate Fe cation.

The protein in the N-terminal section; belongs to the aldehyde dehydrogenase family. In the C-terminal section; belongs to the iron-containing alcohol dehydrogenase family. Fe(2+) is required as a cofactor.

The catalysed reaction is an aldehyde + NAD(+) + H2O = a carboxylate + NADH + 2 H(+). It catalyses the reaction ethanol + NAD(+) = acetaldehyde + NADH + H(+). Its function is as follows. Has alcohol dehydrogenase activity. Has aldehyde dehydrogenase activity. Plays a role in enhancing virulence in mice, under ethanol stress conditions, perhaps by inducing expression of pneumolysin (Ply) and increasing production of hydrogen peroxide H(2)O(2). May be considered a potential virulence factor. The chain is Aldehyde-alcohol dehydrogenase from Streptococcus pneumoniae serotype 2 (strain D39 / NCTC 7466).